A 175-amino-acid chain; its full sequence is Large ribosomal subunit protein uL10 (175 aa).

The protein belongs to the universal ribosomal protein uL10 family. As to quaternary structure, part of the ribosomal stalk of the 50S ribosomal subunit. The N-terminus interacts with L11 and the large rRNA to form the base of the stalk. The C-terminus forms an elongated spine to which L12 dimers bind in a sequential fashion forming a multimeric L10(L12)X complex.

Forms part of the ribosomal stalk, playing a central role in the interaction of the ribosome with GTP-bound translation factors. In Prochlorococcus marinus (strain NATL1A), this protein is Large ribosomal subunit protein uL10.